We begin with the raw amino-acid sequence, 100 residues long: Urease subunit gamma (100 aa).

Belongs to the urease gamma subunit family. As to quaternary structure, heterotrimer of UreA (gamma), UreB (beta) and UreC (alpha) subunits. Three heterotrimers associate to form the active enzyme.

It localises to the cytoplasm. The enzyme catalyses urea + 2 H2O + H(+) = hydrogencarbonate + 2 NH4(+). It participates in nitrogen metabolism; urea degradation; CO(2) and NH(3) from urea (urease route): step 1/1. This Corynebacterium urealyticum (strain ATCC 43042 / DSM 7109) protein is Urease subunit gamma.